An 89-amino-acid polypeptide reads, in one-letter code: Large ribosomal subunit protein eL37A (89 aa).

Zn(2+) is bound by residues Cys19, Cys22, Cys34, and Cys37. The C4-type zinc-finger motif lies at 19-37 (CRRCGKRSFHIQKSTCACC).

It belongs to the eukaryotic ribosomal protein eL37 family. In terms of assembly, component of the large ribosomal subunit (LSU). Mature yeast ribosomes consist of a small (40S) and a large (60S) subunit. The 40S small subunit contains 1 molecule of ribosomal RNA (18S rRNA) and at least 33 different proteins. The large 60S subunit contains 3 rRNA molecules (25S, 5.8S and 5S rRNA) and at least 46 different proteins. The cofactor is Zn(2+).

The protein localises to the cytoplasm. Its function is as follows. Component of the ribosome, a large ribonucleoprotein complex responsible for the synthesis of proteins in the cell. The small ribosomal subunit (SSU) binds messenger RNAs (mRNAs) and translates the encoded message by selecting cognate aminoacyl-transfer RNA (tRNA) molecules. The large subunit (LSU) contains the ribosomal catalytic site termed the peptidyl transferase center (PTC), which catalyzes the formation of peptide bonds, thereby polymerizing the amino acids delivered by tRNAs into a polypeptide chain. The nascent polypeptides leave the ribosome through a tunnel in the LSU and interact with protein factors that function in enzymatic processing, targeting, and the membrane insertion of nascent chains at the exit of the ribosomal tunnel. The polypeptide is Large ribosomal subunit protein eL37A (rpl3703) (Schizosaccharomyces pombe (strain 972 / ATCC 24843) (Fission yeast)).